The chain runs to 1040 residues: Multidrug resistance protein MdtB (1040 aa).

12 helical membrane passes run 16–36 (FIMR…AGII), 347–367 (LMMA…NIPA), 369–389 (IIPG…MVFL), 396–416 (LTLM…IVVI), 440–460 (IGFT…PLLF), 472–492 (FAIT…TLTP), 537–557 (WLTL…WVFI), 863–883 (LGST…VLGI), 888–908 (FIHP…ALLA), 911–931 (IAGS…IGIV), 968–988 (ILMT…STGV), and 998–1018 (IGMV…TPVI).

Belongs to the resistance-nodulation-cell division (RND) (TC 2.A.6) family. MdtB subfamily. As to quaternary structure, part of a tripartite efflux system composed of MdtA, MdtB and MdtC. MdtB forms a heteromultimer with MdtC.

It localises to the cell inner membrane. The polypeptide is Multidrug resistance protein MdtB (Shigella boydii serotype 4 (strain Sb227)).